Here is a 78-residue protein sequence, read N- to C-terminus: Esculentin-2ISa (78 aa).

An N-terminal signal peptide occupies residues 1-22 (MFTLKKSLLLLFFLGTISLSVC). Residues 23–39 (KQERDADYEDKGEVEEV) constitute a propeptide, removed in mature form. Residues Cys72 and Cys78 are joined by a disulfide bond.

In terms of tissue distribution, expressed by the skin glands.

The protein localises to the secreted. Functionally, has antimicrobial activity against Gram-negative bacterium E.coli ATCC 8739 (MIC=12.5 ug), against Gram positive bacteria S.aureus ATCC 6538 (MIC=3.1 ug), methicillin-resistant S.aureus ATCC 43300 (MIC=25 ug), B.subtilis ATCC 6633 (MIC=6.3 ug) and against fungus C.albicans ATCC 90028 (MIC=100 ug). This Odorrana ishikawae (Ishikawa's frog) protein is Esculentin-2ISa.